Reading from the N-terminus, the 890-residue chain is Alanine--tRNA ligase (890 aa).

Residues H573, H577, C675, and H679 each contribute to the Zn(2+) site.

It belongs to the class-II aminoacyl-tRNA synthetase family. It depends on Zn(2+) as a cofactor.

It localises to the cytoplasm. It catalyses the reaction tRNA(Ala) + L-alanine + ATP = L-alanyl-tRNA(Ala) + AMP + diphosphate. In terms of biological role, catalyzes the attachment of alanine to tRNA(Ala) in a two-step reaction: alanine is first activated by ATP to form Ala-AMP and then transferred to the acceptor end of tRNA(Ala). Also edits incorrectly charged Ser-tRNA(Ala) and Gly-tRNA(Ala) via its editing domain. In Streptomyces avermitilis (strain ATCC 31267 / DSM 46492 / JCM 5070 / NBRC 14893 / NCIMB 12804 / NRRL 8165 / MA-4680), this protein is Alanine--tRNA ligase.